The following is a 63-amino-acid chain: Juvenile hormone esterase, isoform B (63 aa).

A glycan (N-linked (GlcNAc...) asparagine) is linked at asparagine 20.

It belongs to the type-B carboxylesterase/lipase family. In terms of tissue distribution, fat body, the site of their biosynthesis, and the hemolymph where it is secreted.

The enzyme catalyses juvenile hormone I + H2O = juvenile hormone I carboxylate + methanol + H(+). It catalyses the reaction juvenile hormone III + H2O = juvenile hormone III carboxylate + methanol + H(+). Functionally, JH esterase plays a crucial role in the decrease of JH activity in lepidopteran insects, by hydrolyzing the methyl ester of JH. It is also involved in the transport of JH. The sequence is that of Juvenile hormone esterase, isoform B from Trichoplusia ni (Cabbage looper).